The primary structure comprises 440 residues: Transposon Ty1-A Gag polyprotein (440 aa).

Polar residues-rich tracts occupy residues Met-1–Ser-23, Thr-48–Ser-60, Ser-71–Gln-93, and Gln-127–Phe-152. Disordered stretches follow at residues Met-1–Gln-93, Pro-126–Pro-173, and Gly-352–Tyr-440. Over residues Thr-153–Thr-165 the composition is skewed to low complexity. The segment at Asn-299–His-401 is RNA-binding. Residues Asn-402–Ser-418 are compositionally biased toward low complexity. Position 416 is a phosphoserine (Ser-416). Over residues Lys-419–Asn-428 the composition is skewed to polar residues. The segment covering Asn-429 to Tyr-440 has biased composition (basic and acidic residues).

In terms of assembly, homotrimer.

The protein localises to the cytoplasm. Functionally, capsid protein (CA) is the structural component of the virus-like particle (VLP), forming the shell that encapsulates the retrotransposons dimeric RNA genome. The particles are assembled from trimer-clustered units and there are holes in the capsid shells that allow for the diffusion of macromolecules. CA also has nucleocapsid-like chaperone activity, promoting primer tRNA(i)-Met annealing to the multipartite primer-binding site (PBS), dimerization of Ty1 RNA and initiation of reverse transcription. In Saccharomyces cerevisiae (strain ATCC 204508 / S288c) (Baker's yeast), this protein is Transposon Ty1-A Gag polyprotein (TY1A-A).